The chain runs to 369 residues: MSIDFQQLPHAGIRSLIPYVPGKSIEELAKEKGITDIIKLASNENPLGCSPLALSAIQTMSSHYIATYPSPWNHPLMSKLASYLKVKPEQLFLSNGSDYLFNILLNCFALHTDRHILTHDYAFSTYAIQANSLQIPINSVPIGHNWEVNITDIVNACNQQTGIIFIANPNNPTGMLIQQEEIKYLLEQIPKSTLLVLDEAYYEFAASQLTVNSLDWLEEHPNLVVTRTFSKIYGMAGLRLGYAIANPSIINILKRVQLPFIVNQVALAAAYAAIDDDDFIQSSLKMNNEGMSQLQAGFNELNIKYLHSSCNFLTFDCEEDSIALYNYLLDNGIIVRPLHAYKMNNFIRVTIGTKEQNSRFLTALKNFYL.

Position 231 is an N6-(pyridoxal phosphate)lysine (Lys-231).

The protein belongs to the class-II pyridoxal-phosphate-dependent aminotransferase family. Histidinol-phosphate aminotransferase subfamily. Homodimer. Pyridoxal 5'-phosphate is required as a cofactor.

The enzyme catalyses L-histidinol phosphate + 2-oxoglutarate = 3-(imidazol-4-yl)-2-oxopropyl phosphate + L-glutamate. It participates in amino-acid biosynthesis; L-histidine biosynthesis; L-histidine from 5-phospho-alpha-D-ribose 1-diphosphate: step 7/9. The chain is Histidinol-phosphate aminotransferase 2 from Legionella pneumophila (strain Paris).